A 141-amino-acid chain; its full sequence is LOB domain-containing protein 34 (141 aa).

Positions 16–119 constitute an LOB domain; sequence NQCAACRHQR…SPLNYVAPVI (104 aa).

It belongs to the LOB domain-containing protein family.

This Arabidopsis thaliana (Mouse-ear cress) protein is LOB domain-containing protein 34 (LBD34).